A 121-amino-acid polypeptide reads, in one-letter code: Large ribosomal subunit protein bL12 (121 aa).

This sequence belongs to the bacterial ribosomal protein bL12 family. In terms of assembly, homodimer. Part of the ribosomal stalk of the 50S ribosomal subunit. Forms a multimeric L10(L12)X complex, where L10 forms an elongated spine to which 2 to 4 L12 dimers bind in a sequential fashion. Binds GTP-bound translation factors.

Its function is as follows. Forms part of the ribosomal stalk which helps the ribosome interact with GTP-bound translation factors. Is thus essential for accurate translation. This is Large ribosomal subunit protein bL12 from Clostridium perfringens (strain 13 / Type A).